The chain runs to 662 residues: DNA ligase (662 aa).

NAD(+) contacts are provided by residues 34 to 38, 83 to 84, and Glu-113; these read DYDYD and SI. Catalysis depends on Lys-115, which acts as the N6-AMP-lysine intermediate. NAD(+)-binding residues include Arg-136, Glu-172, Lys-286, and Lys-310. Zn(2+)-binding residues include Cys-404, Cys-407, Cys-422, and Cys-427. Residues 583–662 form the BRCT domain; the sequence is RESSSCLGKT…NDLLKILYPN (80 aa).

The protein belongs to the NAD-dependent DNA ligase family. LigA subfamily. It depends on Mg(2+) as a cofactor. Requires Mn(2+) as cofactor.

The catalysed reaction is NAD(+) + (deoxyribonucleotide)n-3'-hydroxyl + 5'-phospho-(deoxyribonucleotide)m = (deoxyribonucleotide)n+m + AMP + beta-nicotinamide D-nucleotide.. Functionally, DNA ligase that catalyzes the formation of phosphodiester linkages between 5'-phosphoryl and 3'-hydroxyl groups in double-stranded DNA using NAD as a coenzyme and as the energy source for the reaction. It is essential for DNA replication and repair of damaged DNA. This Chlamydia caviae (strain ATCC VR-813 / DSM 19441 / 03DC25 / GPIC) (Chlamydophila caviae) protein is DNA ligase.